A 587-amino-acid chain; its full sequence is Thiol:disulfide interchange protein DsbD 2 (587 aa).

Positions 1–18 (MRVLILLLMLLLPGLSQA) are cleaved as a signal peptide. Topologically, residues 19-172 (QPGDDLFAPR…SLQAGNLAWS (154 aa)) are periplasmic. Disulfide bonds link Cys124/Cys130 and Cys188/Cys308. Residues 173-193 (LLLFFGLGLLLAFAPCSLPML) form a helical membrane-spanning segment. Residues 194-216 (PILAGLVVGSGAGPRRGLLLAGS) are Cytoplasmic-facing. Residues 217 to 237 (YVLSMALVYAGLGVVAALLGG) form a helical membrane-spanning segment. At 238 to 246 (NLQAWLQQP) the chain is on the periplasmic side. A helical transmembrane segment spans residues 247 to 267 (WLLGSFAALFVFLALPMFGFF). The Cytoplasmic segment spans residues 268–299 (ELQLPAALRDRLDGLSRGRKGGSLAGAAALGA). The helical transmembrane segment at 300–320 (LSGLLVGPCMTAPLAGALLYI) threads the bilayer. Residues 321–330 (AQTGNALHGG) lie on the Periplasmic side of the membrane. Residues 331–351 (LVLFSLGLGIGMPLLLLVTVG) traverse the membrane as a helical segment. Residues 352-360 (SRFLPKPGP) are Cytoplasmic-facing. The chain crosses the membrane as a helical span at residues 361–381 (WMNLVKGVFGFLFLGTAWILL). Over 382 to 383 (RP) the chain is Periplasmic. The chain crosses the membrane as a helical span at residues 384–404 (LLGEALWIGLGGALLLVLAYA). At 405–416 (ALHTARGLARHA) the chain is on the cytoplasmic side. A helical transmembrane segment spans residues 417–437 (VLFGAAGCIFGLWGAAMLLGA). Over 438 to 587 (AAGADDPWRP…AHWQATRERG (150 aa)) the chain is Periplasmic. The 138-residue stretch at 448–585 (LQVYAAANRG…FLAHWQATRE (138 aa)) folds into the Thioredoxin domain. Cys500 and Cys503 are joined by a disulfide.

Belongs to the thioredoxin family. DsbD subfamily.

It localises to the cell inner membrane. The catalysed reaction is [protein]-dithiol + NAD(+) = [protein]-disulfide + NADH + H(+). The enzyme catalyses [protein]-dithiol + NADP(+) = [protein]-disulfide + NADPH + H(+). Functionally, required to facilitate the formation of correct disulfide bonds in some periplasmic proteins and for the assembly of the periplasmic c-type cytochromes. Acts by transferring electrons from cytoplasmic thioredoxin to the periplasm. This transfer involves a cascade of disulfide bond formation and reduction steps. The chain is Thiol:disulfide interchange protein DsbD 2 from Pseudomonas aeruginosa (strain ATCC 15692 / DSM 22644 / CIP 104116 / JCM 14847 / LMG 12228 / 1C / PRS 101 / PAO1).